The primary structure comprises 618 residues: MILQNRTFDLNPNDIAGLELVCQTLRNRILEVVSANGGHLSSSLGAVELIVGMHALFDCQKNPFIFDTSHQAYAHKLLTGRFESFSTLRQFKGLSGFTKPSESAYDYFIAGHSSTSVSIGVGVAKAFCLKQALGMPIALLGDGSISAGIFYEALNELGDRKYPMIMILNDNEMSISTPIGALSKALSQLMKGPFYQSFRSKVKKILSTLPESVNYLASRFEESFKLITPGVFFEELGINYIGPINGHDLSAIIETLKLAKELKEPVLIHAQTLKGKGYKIAEGRYEKWHGVGPFDLDTGLSKKSKSAILSPTEAYSNTLLELAKKDEKIVGVTAAMPSGTGLDKLIDAYPLRFFDVAIAEQHALTSSSAMAKEGFKPFVSIYSTFLQRAYDSIVHDACISSLPIKLAIDRAGIVGEDGETHQGLLDVSYLRSIPNMVIFAPRDNETLKNAVRFANEHDSSPCAFRYPRGSFVLKEGVFEPSGFVLGQSELLKKEGEILLIGYGNGVGRAHLVQLALKEKNIECALLDLRFLKPLDPNLSAIVAPYQKLYVFSDNYKLGGVASAILEFLSEQNILKPVKSFEIIDEFIMHGNTALVEKSLGLDTESLTDAILKDLGQER.

Thiamine diphosphate is bound by residues His70 and 111–113 (GHS). Asp142 serves as a coordination point for Mg(2+). Thiamine diphosphate is bound by residues 143–144 (GS), Asn171, Tyr278, and Glu360. Asn171 is a binding site for Mg(2+).

The protein belongs to the transketolase family. DXPS subfamily. As to quaternary structure, homodimer. Mg(2+) is required as a cofactor. Thiamine diphosphate serves as cofactor.

It carries out the reaction D-glyceraldehyde 3-phosphate + pyruvate + H(+) = 1-deoxy-D-xylulose 5-phosphate + CO2. It functions in the pathway metabolic intermediate biosynthesis; 1-deoxy-D-xylulose 5-phosphate biosynthesis; 1-deoxy-D-xylulose 5-phosphate from D-glyceraldehyde 3-phosphate and pyruvate: step 1/1. Its function is as follows. Catalyzes the acyloin condensation reaction between C atoms 2 and 3 of pyruvate and glyceraldehyde 3-phosphate to yield 1-deoxy-D-xylulose-5-phosphate (DXP). The polypeptide is 1-deoxy-D-xylulose-5-phosphate synthase (Helicobacter pylori (strain G27)).